The primary structure comprises 185 residues: MKLLTDFLPIILFFVAYRIHGIYTATEVLIVAAILLMAWQWWRRGRVETMTWVSTLLILTFGGLTLYFHNDTFIKIKPSILYVLFAAALLFTHWREEPLLQRLMGGQLPAALPLSFWRRLNGYWIAFFLFGAVLNLIVAYAFSTGIWVDFKLFGMLAITVIFVLFQAVVISRALPQEAKDGDSSA.

The next 5 helical transmembrane spans lie at 19–39 (IHGIYTATEVLIVAAILLMAW), 49–69 (TMTWVSTLLILTFGGLTLYFH), 72–92 (TFIKIKPSILYVLFAAALLFT), 122–142 (GYWIAFFLFGAVLNLIVAYAF), and 150–170 (FKLFGMLAITVIFVLFQAVVI).

Belongs to the YciB family.

It localises to the cell inner membrane. Functionally, plays a role in cell envelope biogenesis, maintenance of cell envelope integrity and membrane homeostasis. The protein is Inner membrane-spanning protein YciB of Acidithiobacillus ferrooxidans (strain ATCC 23270 / DSM 14882 / CIP 104768 / NCIMB 8455) (Ferrobacillus ferrooxidans (strain ATCC 23270)).